Reading from the N-terminus, the 246-residue chain is MNNNTTAPTYTLRGLQLIGWRDMQHALDYLFADGQLKQGTLVAINAEKMLTIEDNAEVRELINAAEFKYADGISVVRSVRKKYPQAQVSRVAGADLWEELMARAGKEGTQVFLVGGKPEVLAQTEAKLRNQWNVNIVGSQDGYFKPEQRQALFERIHASGAQIVTVAMGAPKQEIFMRDCRLVHPDALYMGVGGTYDVFTGHVKRAPKIWQTLGLEWLYRLLSQPSRIKRQLRLLRYLRWHYTGNL.

It belongs to the glycosyltransferase 26 family.

The enzyme catalyses UDP-N-acetyl-alpha-D-mannosaminouronate + N-acetyl-alpha-D-glucosaminyl-di-trans,octa-cis-undecaprenyl diphosphate = beta-D-ManNAcA-(1-&gt;4)-alpha-D-GlcNAc-di-trans,octa-cis-undecaprenyl diphosphate + UDP + H(+). Its pathway is bacterial outer membrane biogenesis; enterobacterial common antigen biosynthesis. Catalyzes the synthesis of Und-PP-GlcNAc-ManNAcA (Lipid II), the second lipid-linked intermediate involved in enterobacterial common antigen (ECA) synthesis. The protein is UDP-N-acetyl-D-mannosaminuronic acid transferase of Escherichia coli O1:K1 / APEC.